Consider the following 416-residue polypeptide: Serine protease inhibitor A3K (416 aa).

Positions 1-20 are cleaved as a signal peptide; that stretch reads MAFIAALGLLMAGICPAVLC. Residues asparagine 102, asparagine 182, asparagine 220, and asparagine 267 are each glycosylated (N-linked (GlcNAc...) asparagine). Residues 365–392 are RCL; that stretch reads GTEGAAATAVTAALKSLPQTIPLLNFNR.

This sequence belongs to the serpin family. In terms of processing, N-glycosylated. Liver and plasma.

Its subcellular location is the secreted. In terms of biological role, binds to and inhibits kallikreins. Inhibits trypsin but not chymotrypsin or elastase. The sequence is that of Serine protease inhibitor A3K (Serpina3k) from Rattus norvegicus (Rat).